The primary structure comprises 270 residues: NAD kinase (270 aa).

The Proton acceptor role is filled by Asp-45. Residues Asp-45 to Gly-46, Asn-121 to Glu-122, Arg-147, Asp-149, Thr-160 to Ser-165, and Ala-184 contribute to the NAD(+) site.

This sequence belongs to the NAD kinase family. Requires a divalent metal cation as cofactor.

The protein localises to the cytoplasm. It carries out the reaction NAD(+) + ATP = ADP + NADP(+) + H(+). Involved in the regulation of the intracellular balance of NAD and NADP, and is a key enzyme in the biosynthesis of NADP. Catalyzes specifically the phosphorylation on 2'-hydroxyl of the adenosine moiety of NAD to yield NADP. The chain is NAD kinase from Limosilactobacillus reuteri subsp. reuteri (strain JCM 1112) (Lactobacillus reuteri).